Here is a 320-residue protein sequence, read N- to C-terminus: Cytochrome f (320 aa).

An N-terminal signal peptide occupies residues 1–35 (MQNRKTFSWVKEQMTRSIYVSIMIYVITRASISNA). Heme contacts are provided by Tyr-36, Cys-56, Cys-59, and His-60. A helical transmembrane segment spans residues 286-306 (VQGLLFFLASVILAQIFLVLK).

It belongs to the cytochrome f family. The 4 large subunits of the cytochrome b6-f complex are cytochrome b6, subunit IV (17 kDa polypeptide, petD), cytochrome f and the Rieske protein, while the 4 small subunits are PetG, PetL, PetM and PetN. The complex functions as a dimer. Heme is required as a cofactor.

It localises to the plastid. Its subcellular location is the chloroplast thylakoid membrane. Functionally, component of the cytochrome b6-f complex, which mediates electron transfer between photosystem II (PSII) and photosystem I (PSI), cyclic electron flow around PSI, and state transitions. The protein is Cytochrome f of Phalaenopsis aphrodite subsp. formosana (Moth orchid).